A 172-amino-acid polypeptide reads, in one-letter code: Stellate protein CG33237 (172 aa).

It belongs to the casein kinase 2 subunit beta family. Interacts in vitro with the casein kinase 2 alpha subunit (CkII-alpha). The relevance of such interaction is however unclear in vivo. Probably not expressed in wild-type flies. In males lacking the Y chromosome, it is testis-specific and constitutes the main component of star-shaped crystals.

Its function is as follows. Unknown. In males lacking the Y chromosome, its strong overexpression leads to the appearance of proteinaceous star-shaped crystals in the primary spermatocytes causing meiotic drive, possibly by interfering with normal casein kinase 2 activity. The chain is Stellate protein CG33237 (Ste:CG33237) from Drosophila melanogaster (Fruit fly).